A 648-amino-acid chain; its full sequence is Biosynthetic arginine decarboxylase (648 aa).

Lysine 109 carries the post-translational modification N6-(pyridoxal phosphate)lysine. 291–301 (IDVGGGLGIDF) is a substrate binding site.

This sequence belongs to the Orn/Lys/Arg decarboxylase class-II family. SpeA subfamily. The cofactor is Mg(2+). Pyridoxal 5'-phosphate is required as a cofactor.

The catalysed reaction is L-arginine + H(+) = agmatine + CO2. It participates in amine and polyamine biosynthesis; agmatine biosynthesis; agmatine from L-arginine: step 1/1. Catalyzes the biosynthesis of agmatine from arginine. The protein is Biosynthetic arginine decarboxylase of Prochlorococcus marinus (strain MIT 9515).